A 215-amino-acid chain; its full sequence is MTTQRHYSPIDRLLLQADAAMRTLLPFSGQPYRPSPAIVQPDVQMSDEDIRHVAGLMRINHTGEVCAQALYQGQALTAKLPQVREAMEHAAEEEIDHLVWCEQRIHQLGSHTSVLNPLFYGMSFGIGAVAGLISDKVSLGFVAATEHQVCKHLNEHLEQLPAEDEKSRAILEQMRIDEEHHAESALEAGGFRFPAPVKFGMSLLAKVMTKSTYRI.

Residues Glu-64, Glu-94, His-97, Glu-146, Glu-178, and His-181 each coordinate Fe cation.

It belongs to the COQ7 family. Fe cation is required as a cofactor.

Its subcellular location is the cell membrane. It catalyses the reaction a 5-methoxy-2-methyl-3-(all-trans-polyprenyl)benzene-1,4-diol + AH2 + O2 = a 3-demethylubiquinol + A + H2O. The protein operates within cofactor biosynthesis; ubiquinone biosynthesis. Catalyzes the hydroxylation of 2-nonaprenyl-3-methyl-6-methoxy-1,4-benzoquinol during ubiquinone biosynthesis. The polypeptide is 3-demethoxyubiquinol 3-hydroxylase (Pseudomonas fluorescens (strain Pf0-1)).